The sequence spans 290 residues: Protein male abnormal 3 (290 aa).

2 consecutive DNA-binding regions (DM) follow at residues 28–74 and 94–142; these read CQRC…SKKK and CARC…KLRR. Disordered stretches follow at residues 139-167 and 179-202; these read KLRR…MDME and IIGT…LSMS. Over residues 146–155 the composition is skewed to basic and acidic residues; sequence KSRDGKEPKR. A compositionally biased stretch (low complexity) spans 182–202; it reads TSASPSPSSTTDTMSPSLSMS.

Expression is undetectable in hermaphrodites, but persists in males. In males, expressed in cells of the tail tip.

Its subcellular location is the nucleus. Functionally, transcription factor which binds the DNA motif 5'-[CGA][TCA][TA]ACAATGT[AT][TGA]C-3', probably as a monomer. Acts partially redundantly with the transcription factor dmd-3 to coordinate tail tip cell fusion and retraction and thereby regulate male tail tip morphogenesis. Promotes male-specific development of two tissues, the peripheral nervous system and the intestine. In the peripheral nervous system, directs differentiation of sensory ray neuroblasts into peripheral sense organs. In the intestine, causes repression of vitellogenin gene transcription. The sequence is that of Protein male abnormal 3 from Caenorhabditis elegans.